The following is a 141-amino-acid chain: Hemoglobin subunit alpha-1 (141 aa).

In terms of domain architecture, Globin spans 1-141 (VLSAADKGNV…VSTVLTSKYR (141 aa)). His-58 serves as a coordination point for O2. His-87 contacts heme b.

This sequence belongs to the globin family. In terms of assembly, heterotetramer of two alpha chains and two beta chains. As to expression, red blood cells.

In terms of biological role, involved in oxygen transport from the lung to the various peripheral tissues. The polypeptide is Hemoglobin subunit alpha-1 (Bos mutus grunniens (Wild yak)).